The chain runs to 368 residues: (Iso)eugenol O-methyltransferase (368 aa).

Residues 1-2 (MG) constitute a propeptide that is removed on maturation. Residues S187, 211-212 (GG), D234, 254-255 (DM), and K268 each bind S-adenosyl-L-methionine. H272 acts as the Proton acceptor in catalysis.

Belongs to the class I-like SAM-binding methyltransferase superfamily. Cation-independent O-methyltransferase family. COMT subfamily. Homodimer. As to expression, expressed in petals, style and stamens, but not in stigma, sepals, leaves or stem tissues.

The enzyme catalyses (E)-isoeugenol + S-adenosyl-L-methionine = (E)-isomethyleugenol + S-adenosyl-L-homocysteine + H(+). In terms of biological role, catalyzes the methylation of the para-4-hydroxyl of both eugenol and (iso)eugenol to methyleugenol and isomethyleugenol, respectively. The resulting products are part of a complex mixture of low-molecular-weight volatile compounds emitted by the flowers to attract pollinators. The polypeptide is (Iso)eugenol O-methyltransferase (IEMT1) (Clarkia breweri (Fairy fans)).